A 403-amino-acid chain; its full sequence is Na(+)/H(+) antiporter NhaH (403 aa).

Over 1-6 the chain is Cytoplasmic; sequence MHGFHD. A helical transmembrane segment spans residues 7–27; sequence VFIQILLLLAISVSVIAIAKL. The Extracellular portion of the chain corresponds to 28–30; sequence LKE. The chain crosses the membrane as a helical span at residues 31-51; it reads PDSIALVLVGLVLGLTELPII. At 52–65 the chain is on the cytoplasmic side; it reads EDAERYITQSEVFQ. A helical membrane pass occupies residues 66-86; it reads ATIISLFLPILLGDATLKLPF. The Extracellular segment spans residues 87–98; the sequence is HHLFSQKKTVLG. Residues 99–119 form a helical membrane-spanning segment; the sequence is LAFVGTFVSSICIGTAAYFLL. At 120–124 the chain is on the cytoplasmic side; that stretch reads DLPLA. Residues 125–145 form a helical membrane-spanning segment; sequence VAFTFAALMSATDPISVLSIF. Over 146–167 the chain is Extracellular; the sequence is KSLGVPQKMSTVMEGESLFNDG. A helical membrane pass occupies residues 168-188; the sequence is IAVVLFKIASIYLLTYMEMGW. The Cytoplasmic segment spans residues 189–195; sequence AGLGSGV. A helical transmembrane segment spans residues 196–216; it reads FLFLKFAIGGALVGLVLGYFF. The Extracellular segment spans residues 217–218; that stretch reads SQ. Residues 219 to 239 form a helical membrane-spanning segment; it reads VIRVFDDYPLEVAFSALLFFG. At 240 to 241 the chain is on the cytoplasmic side; that stretch reads SY. Residues 242–262 traverse the membrane as a helical segment; that stretch reads FIAEHFHTSGVIAVVVGGFVF. Topologically, residues 263 to 281 are extracellular; it reads GDYGAKIGMSKETKTNINT. A helical transmembrane segment spans residues 282–302; the sequence is FWDSVTLIANALIFLMVGLEI. The Cytoplasmic segment spans residues 303-310; it reads RNIDLAGN. Residues 311 to 331 form a helical membrane-spanning segment; the sequence is WGVIVGAILIVLVGRTIAVYL. Residues 332–372 are Extracellular-facing; the sequence is GTGWVQELSSKERLLINWGGLRGSLSVALALSLPMDFAGRD. Residues 373 to 393 form a helical membrane-spanning segment; that stretch reads QVLLLTFSVVLFSLIVQGLTL. Topologically, residues 394–403 are cytoplasmic; that stretch reads KPLIKKLGMI.

This sequence belongs to the monovalent cation:proton antiporter 1 (CPA1) transporter (TC 2.A.36) family.

The protein resides in the cell membrane. In terms of biological role, na(+)/H(+) antiporter that extrudes sodium in exchange for external protons. Can also transport lithium. The chain is Na(+)/H(+) antiporter NhaH (nhaH) from Halobacillus dabanensis.